A 476-amino-acid polypeptide reads, in one-letter code: Aspartyl/glutamyl-tRNA(Asn/Gln) amidotransferase subunit B (476 aa).

It belongs to the GatB/GatE family. GatB subfamily. In terms of assembly, heterotrimer of A, B and C subunits.

The catalysed reaction is L-glutamyl-tRNA(Gln) + L-glutamine + ATP + H2O = L-glutaminyl-tRNA(Gln) + L-glutamate + ADP + phosphate + H(+). It catalyses the reaction L-aspartyl-tRNA(Asn) + L-glutamine + ATP + H2O = L-asparaginyl-tRNA(Asn) + L-glutamate + ADP + phosphate + 2 H(+). Allows the formation of correctly charged Asn-tRNA(Asn) or Gln-tRNA(Gln) through the transamidation of misacylated Asp-tRNA(Asn) or Glu-tRNA(Gln) in organisms which lack either or both of asparaginyl-tRNA or glutaminyl-tRNA synthetases. The reaction takes place in the presence of glutamine and ATP through an activated phospho-Asp-tRNA(Asn) or phospho-Glu-tRNA(Gln). The protein is Aspartyl/glutamyl-tRNA(Asn/Gln) amidotransferase subunit B of Geobacillus thermodenitrificans (strain NG80-2).